We begin with the raw amino-acid sequence, 373 residues long: Flagellar P-ring protein (373 aa).

An N-terminal signal peptide occupies residues 1 to 26; sequence MKLFFRFVTLVAVLAMSLANVAPAWA.

It belongs to the FlgI family. As to quaternary structure, the basal body constitutes a major portion of the flagellar organelle and consists of four rings (L,P,S, and M) mounted on a central rod.

It localises to the periplasm. Its subcellular location is the bacterial flagellum basal body. In terms of biological role, assembles around the rod to form the L-ring and probably protects the motor/basal body from shearing forces during rotation. The chain is Flagellar P-ring protein from Rhizobium johnstonii (strain DSM 114642 / LMG 32736 / 3841) (Rhizobium leguminosarum bv. viciae).